The primary structure comprises 157 residues: 6,7-dimethyl-8-ribityllumazine synthase (157 aa).

Residues phenylalanine 26, 60-62 (ALE), and 86-88 (AVI) contribute to the 5-amino-6-(D-ribitylamino)uracil site. Residue 91-92 (ET) participates in (2S)-2-hydroxy-3-oxobutyl phosphate binding. Histidine 94 (proton donor) is an active-site residue. Residue asparagine 119 coordinates 5-amino-6-(D-ribitylamino)uracil. Residue arginine 133 coordinates (2S)-2-hydroxy-3-oxobutyl phosphate.

This sequence belongs to the DMRL synthase family.

It catalyses the reaction (2S)-2-hydroxy-3-oxobutyl phosphate + 5-amino-6-(D-ribitylamino)uracil = 6,7-dimethyl-8-(1-D-ribityl)lumazine + phosphate + 2 H2O + H(+). It functions in the pathway cofactor biosynthesis; riboflavin biosynthesis; riboflavin from 2-hydroxy-3-oxobutyl phosphate and 5-amino-6-(D-ribitylamino)uracil: step 1/2. In terms of biological role, catalyzes the formation of 6,7-dimethyl-8-ribityllumazine by condensation of 5-amino-6-(D-ribitylamino)uracil with 3,4-dihydroxy-2-butanone 4-phosphate. This is the penultimate step in the biosynthesis of riboflavin. The sequence is that of 6,7-dimethyl-8-ribityllumazine synthase from Laribacter hongkongensis (strain HLHK9).